The following is a 376-amino-acid chain: Carbamoyl phosphate synthase small chain (376 aa).

Positions 1 to 187 are CPSase; that stretch reads MKALLALEDG…KEDGSFLWKQ (187 aa). 3 residues coordinate L-glutamine: S45, G239, and G241. The Glutamine amidotransferase type-1 domain maps to 189–376; it reads KIPLIVYDYG…KEVVLLKLGC (188 aa). C266 acts as the Nucleophile in catalysis. Positions 267, 270, 308, 310, and 311 each coordinate L-glutamine. Active-site residues include H349 and E351.

This sequence belongs to the CarA family. As to quaternary structure, composed of two chains; the small (or glutamine) chain promotes the hydrolysis of glutamine to ammonia, which is used by the large (or ammonia) chain to synthesize carbamoyl phosphate. Tetramer of heterodimers (alpha,beta)4.

The catalysed reaction is hydrogencarbonate + L-glutamine + 2 ATP + H2O = carbamoyl phosphate + L-glutamate + 2 ADP + phosphate + 2 H(+). The enzyme catalyses L-glutamine + H2O = L-glutamate + NH4(+). Its pathway is amino-acid biosynthesis; L-arginine biosynthesis; carbamoyl phosphate from bicarbonate: step 1/1. It functions in the pathway pyrimidine metabolism; UMP biosynthesis via de novo pathway; (S)-dihydroorotate from bicarbonate: step 1/3. In terms of biological role, small subunit of the glutamine-dependent carbamoyl phosphate synthetase (CPSase). CPSase catalyzes the formation of carbamoyl phosphate from the ammonia moiety of glutamine, carbonate, and phosphate donated by ATP, constituting the first step of 2 biosynthetic pathways, one leading to arginine and/or urea and the other to pyrimidine nucleotides. The small subunit (glutamine amidotransferase) binds and cleaves glutamine to supply the large subunit with the substrate ammonia. In Lawsonia intracellularis (strain PHE/MN1-00), this protein is Carbamoyl phosphate synthase small chain.